The following is a 277-amino-acid chain: 14-3-3 protein (277 aa).

The interval Leu252–Gln277 is disordered. A compositionally biased stretch (basic and acidic residues) spans Glu267–Gln277.

The protein belongs to the 14-3-3 family.

The sequence is that of 14-3-3 protein from Eimeria tenella (Coccidian parasite).